The primary structure comprises 281 residues: Bifunctional protein FolD (281 aa).

Residues 165–167, Thr-192, and Val-233 contribute to the NADP(+) site; that span reads GRG.

The protein belongs to the tetrahydrofolate dehydrogenase/cyclohydrolase family. Homodimer.

The catalysed reaction is (6R)-5,10-methylene-5,6,7,8-tetrahydrofolate + NADP(+) = (6R)-5,10-methenyltetrahydrofolate + NADPH. It catalyses the reaction (6R)-5,10-methenyltetrahydrofolate + H2O = (6R)-10-formyltetrahydrofolate + H(+). It functions in the pathway one-carbon metabolism; tetrahydrofolate interconversion. Its function is as follows. Catalyzes the oxidation of 5,10-methylenetetrahydrofolate to 5,10-methenyltetrahydrofolate and then the hydrolysis of 5,10-methenyltetrahydrofolate to 10-formyltetrahydrofolate. This is Bifunctional protein FolD from Mycobacterium marinum (strain ATCC BAA-535 / M).